Here is a 121-residue protein sequence, read N- to C-terminus: Phosphoribosyl-ATP pyrophosphatase (121 aa).

Belongs to the PRA-PH family.

Its subcellular location is the cytoplasm. It catalyses the reaction 1-(5-phospho-beta-D-ribosyl)-ATP + H2O = 1-(5-phospho-beta-D-ribosyl)-5'-AMP + diphosphate + H(+). It functions in the pathway amino-acid biosynthesis; L-histidine biosynthesis; L-histidine from 5-phospho-alpha-D-ribose 1-diphosphate: step 2/9. This chain is Phosphoribosyl-ATP pyrophosphatase, found in Burkholderia ambifaria (strain MC40-6).